The sequence spans 2430 residues: DNA-directed RNA polymerase subunit beta'' (2430 aa).

4 residues coordinate Zn(2+): cysteine 336, cysteine 455, cysteine 462, and cysteine 465.

This sequence belongs to the RNA polymerase beta' chain family. RpoC2 subfamily. In plastids the minimal PEP RNA polymerase catalytic core is composed of four subunits: alpha, beta, beta', and beta''. When a (nuclear-encoded) sigma factor is associated with the core the holoenzyme is formed, which can initiate transcription. Requires Zn(2+) as cofactor.

It is found in the plastid. The protein localises to the chloroplast. The catalysed reaction is RNA(n) + a ribonucleoside 5'-triphosphate = RNA(n+1) + diphosphate. Functionally, DNA-dependent RNA polymerase catalyzes the transcription of DNA into RNA using the four ribonucleoside triphosphates as substrates. This Stigeoclonium helveticum (Green alga) protein is DNA-directed RNA polymerase subunit beta''.